Here is a 120-residue protein sequence, read N- to C-terminus: uncharacterized protein (120 aa).

3 consecutive transmembrane segments (helical) span residues 24–44 (ALLG…ALCY), 61–81 (IGVV…NLAV), and 86–106 (PLGK…GIVV).

The protein to M.leprae ML1176.

It localises to the cell membrane. This is an uncharacterized protein from Mycobacterium bovis (strain ATCC BAA-935 / AF2122/97).